The primary structure comprises 32 residues: Trypsin inhibitor 4 (32 aa).

Disulfide bonds link Cys-6-Cys-23, Cys-13-Cys-25, and Cys-19-Cys-31.

Belongs to the protease inhibitor I7 (squash-type serine protease inhibitor) family.

Its subcellular location is the secreted. In terms of biological role, inhibits trypsin. This Cucurbita maxima (Pumpkin) protein is Trypsin inhibitor 4.